The sequence spans 276 residues: Phospholipid phosphatase 2 (276 aa).

Residues 1-4 are Cytoplasmic-facing; sequence MERR. A helical membrane pass occupies residues 5 to 25; that stretch reads WVFVLLDVLCVLVASLPFIIL. Topologically, residues 26–51 are lumenal; that stretch reads TLVNAPYKRGFYCGDDSIRYPYRPDT. The chain crosses the membrane as a helical span at residues 52 to 72; that stretch reads ITHGLMAGVIITATVILVSLG. Residues 73–87 lie on the Cytoplasmic side of the membrane; sequence EAYLVYTDRLYSRSN. Residues 88–108 traverse the membrane as a helical segment; that stretch reads FNNYVAAIYKVLGTFLFGAAV. Topologically, residues 109 to 161 are lumenal; that stretch reads SQSLTDLAKYMIGRLRPSFLAVCDPDWSQVNCSGYVQLEVCRGSPANVTEARL. Residues 117–125 form a phosphatase sequence motif I region; it reads KYMIGRLRP. Residues Asn139 and Asn155 are each glycosylated (N-linked (GlcNAc...) asparagine). A helical transmembrane segment spans residues 162-182; sequence SFYSGHSSFGMYCMLFLALYV. The interval 164–167 is phosphatase sequence motif II; the sequence is YSGH. The active-site Proton donors is His167. Topologically, residues 183 to 189 are cytoplasmic; the sequence is QARLCWK. The chain crosses the membrane as a helical span at residues 190–210; that stretch reads WARLLRPTVQFFLVAFAIYVG. Residues 211-218 are Lumenal-facing; it reads YTRVSDHK. The interval 212–223 is phosphatase sequence motif III; that stretch reads TRVSDHKHHWSD. His219 serves as the catalytic Nucleophile. The chain crosses the membrane as a helical span at residues 219 to 239; it reads HHWSDVLVGLLQGALVACLTV. Topologically, residues 240-276 are cytoplasmic; it reads RYVSDFFKSRPPQPCQEDEVPERKPSLSLTLTLGDRP. The segment at 251 to 276 is disordered; it reads PQPCQEDEVPERKPSLSLTLTLGDRP.

This sequence belongs to the PA-phosphatase related phosphoesterase family. In terms of assembly, forms functional homodimers and homooligomers. Can also form heterooligomers with PLPP1 and PLPP3. N-glycosylated. In terms of tissue distribution, expressed at high levels in lung, liver and kidney; at low levels in heart and brain, and was not detected in skeletal muscle.

The protein resides in the membrane. Its subcellular location is the cell membrane. It localises to the early endosome membrane. It is found in the endoplasmic reticulum membrane. It carries out the reaction a 1,2-diacyl-sn-glycero-3-phosphate + H2O = a 1,2-diacyl-sn-glycerol + phosphate. The catalysed reaction is 1,2-dihexadecanoyl-sn-glycero-3-phosphate + H2O = 1,2-dihexadecanoyl-sn-glycerol + phosphate. The enzyme catalyses 1,2-di-(9Z-octadecenoyl)-sn-glycero-3-phosphate + H2O = 1,2-di-(9Z-octadecenoyl)-sn-glycerol + phosphate. It catalyses the reaction a monoacyl-sn-glycero-3-phosphate + H2O = a monoacylglycerol + phosphate. It carries out the reaction (9Z)-octadecenoyl-sn-glycero-3-phosphate + H2O = (9Z-octadecenoyl)-glycerol + phosphate. The catalysed reaction is sphing-4-enine 1-phosphate + H2O = sphing-4-enine + phosphate. The enzyme catalyses an N-acylsphing-4-enine 1-phosphate + H2O = an N-acylsphing-4-enine + phosphate. It catalyses the reaction N-(octanoyl)-sphing-4-enine-1-phosphate + H2O = N-octanoylsphing-4-enine + phosphate. It carries out the reaction N-(9Z-octadecenoyl)-ethanolamine phosphate + H2O = N-(9Z-octadecenoyl) ethanolamine + phosphate. It participates in lipid metabolism; phospholipid metabolism. Magnesium-independent phospholipid phosphatase. Insensitive to N-ethylmaleimide. Its function is as follows. Magnesium-independent phospholipid phosphatase that catalyzes the dephosphorylation of a variety of glycerolipid and sphingolipid phosphate esters including phosphatidate/PA, lysophosphatidate/LPA, sphingosine 1-phosphate/S1P and ceramide 1-phosphate/C1P. Has no apparent extracellular phosphatase activity and therefore most probably acts intracellularly. Also acts on N-oleoyl ethanolamine phosphate/N-(9Z-octadecenoyl)-ethanolamine phosphate, a potential physiological compound. Through dephosphorylation of these bioactive lipid mediators produces new bioactive compounds and may regulate signal transduction in different cellular processes. Indirectly regulates, for instance, cell cycle G1/S phase transition through its phospholipid phosphatase activity. The chain is Phospholipid phosphatase 2 from Mus musculus (Mouse).